A 258-amino-acid chain; its full sequence is MLGDFIIRLLVLILGYTYPAFECFKTVEKNKVDIEELRFWCQYWILLALISSFERVGDFFISWLPLYGEMKVVFFVYLWYPKTKGTRHVYETLLKPYMAQHETEIDRKIMELRARAWDFFIFYFNNFAQAGQSTLIQGFQYVLAQSVRFSAAAANQPPTERNVNMNAQSPVEMDNDPPSPRAPRPLNKSLSALRSLEKQTSRGRKWPPPTPPPTPGRDSAGTFNGDDGVNIPDTIPGSPLTDARAKLRRSNSRTQPAA.

The interval 153-258 (AANQPPTERN…RSNSRTQPAA (106 aa)) is disordered. Residues 156 to 169 (QPPTERNVNMNAQS) show a composition bias toward polar residues. Residues 206-215 (WPPPTPPPTP) show a composition bias toward pro residues.

The protein belongs to the DP1 family.

This is HVA22-like protein j (HVA22J) from Arabidopsis thaliana (Mouse-ear cress).